A 220-amino-acid polypeptide reads, in one-letter code: Telomere repeats-binding bouquet formation protein 2 (220 aa).

This sequence belongs to the TERB2 family. Component of the MAJIN-TERB1-TERB2 complex, composed of MAJIN, TERB1 and TERB2.

The protein localises to the chromosome. It is found in the telomere. The protein resides in the nucleus inner membrane. Functionally, meiosis-specific telomere-associated protein involved in meiotic telomere attachment to the nucleus inner membrane, a crucial step for homologous pairing and synapsis. Component of the MAJIN-TERB1-TERB2 complex, which promotes telomere cap exchange by mediating attachment of telomeric DNA to the inner nuclear membrane and replacement of the protective cap of telomeric chromosomes: in early meiosis, the MAJIN-TERB1-TERB2 complex associates with telomeric DNA and the shelterin/telosome complex. During prophase, the complex matures and promotes release of the shelterin/telosome complex from telomeric DNA. In Homo sapiens (Human), this protein is Telomere repeats-binding bouquet formation protein 2 (TERB2).